We begin with the raw amino-acid sequence, 262 residues long: MRNSYRFLASSLSVVVSLLLIPEDVCEKIIGGNEVTPHSRPYMVLLSLDRKTICAGALIAKDWVLTAAHCNLNKRSQVILGAHSITREEPTKQIMLVKKEFPYPCYDPATREGDLKLLQLMEKAKINKYVTILHLPKKGDDVKPGTMCQVAGWGRTHNSASWSDTLREVNITIIDRKVCNDRNHYNFNPVIGMNMVCAGSLRGGRDSCNGDSGSPLLCEGVFRGVTSFGLENKCGDPRGPGVYILLSKKHLNWIIMTIKGAV.

Positions 1–26 (MRNSYRFLASSLSVVVSLLLIPEDVC) are cleaved as a signal peptide. Positions 27-28 (EK) are cleaved as a propeptide — activation peptide. Residues 29 to 259 (IIGGNEVTPH…HLNWIIMTIK (231 aa)) form the Peptidase S1 domain. C54 and C70 form a disulfide bridge. Active-site charge relay system residues include H69 and D114. 3 cysteine pairs are disulfide-bonded: C148–C218, C179–C197, and C208–C234. The N-linked (GlcNAc...) asparagine glycan is linked to N170. The Charge relay system role is filled by S212.

The protein belongs to the peptidase S1 family. Granzyme subfamily. As to quaternary structure, homodimer; disulfide-linked. Interacts with APEX1.

Its subcellular location is the secreted. The protein localises to the cytoplasmic granule. It carries out the reaction Hydrolysis of proteins, including fibronectin, type IV collagen and nucleolin. Preferential cleavage: -Arg-|-Xaa-, -Lys-|-Xaa- &gt;&gt; -Phe-|-Xaa- in small molecule substrates.. Abundant protease in the cytosolic granules of cytotoxic T-cells and NK-cells which activates caspase-independent pyroptosis when delivered into the target cell through the immunological synapse. It cleaves after Lys or Arg. Once delivered into the target cell, acts by catalyzing cleavage of gasdermin-B (GSDMB), releasing the pore-forming moiety of GSDMB, thereby triggering pyroptosis and target cell death. Cleaves APEX1 after 'Lys-31' and destroys its oxidative repair activity. Cleaves the nucleosome assembly protein SET after 'Lys-189', which disrupts its nucleosome assembly activity and allows the SET complex to translocate into the nucleus to nick and degrade the DNA. The sequence is that of Granzyme A from Homo sapiens (Human).